Here is a 354-residue protein sequence, read N- to C-terminus: Protein-arginine kinase (354 aa).

Positions 24–254 (IVLSSRIRLA…QQIIQQEKLA (231 aa)) constitute a Phosphagen kinase C-terminal domain. Residues 27-31 (SSRIR), H92, R125, 176-180 (RASVM), and 207-212 (RGIYGE) contribute to the ATP site. Residues 337 to 342 (RDYRRA) carry the RDXXRA motif of the pArg binding pocket involved in allosteric regulation motif.

It belongs to the ATP:guanido phosphotransferase family.

The catalysed reaction is L-arginyl-[protein] + ATP = N(omega)-phospho-L-arginyl-[protein] + ADP + H(+). With respect to regulation, appears to be allosterically activated by the binding of pArg-containing polypeptides to the pArg-binding pocket localized in the C-terminal domain of McsB. Functionally, catalyzes the specific phosphorylation of arginine residues in a large number of proteins. Is part of the bacterial stress response system. Protein arginine phosphorylation has a physiologically important role and is involved in the regulation of many critical cellular processes, such as protein homeostasis, motility, competence, and stringent and stress responses, by regulating gene expression and protein activity. The polypeptide is Protein-arginine kinase (Bacillus cereus (strain B4264)).